The following is a 397-amino-acid chain: Urea transporter 2 (397 aa).

5 helical membrane-spanning segments follow: residues 68-85 (VMFV…IGLF), 92-109 (AIAG…ALIL), 115-135 (AIAS…IAVF), 143-163 (WWLL…SSAL), and 172-192 (LPVF…ATGH). N210 carries an N-linked (GlcNAc...) asparagine glycan. The next 5 helical transmembrane spans lie at 239-257 (WTGG…LICL), 264-280 (TMGM…FDSI), 287-303 (FNST…FYVI), 309-329 (LLAV…TNVL), and 331-351 (VFGL…FLLL).

This sequence belongs to the urea transporter family. As to expression, kidney.

Its subcellular location is the apical cell membrane. The protein resides in the basolateral cell membrane. It carries out the reaction urea(in) = urea(out). Inhibited by urea analogs and phloretin. Mediates the transport of urea driven by a concentration gradient across the cell membrane of the renal inner medullary collecting duct which is critical to the urinary concentrating mechanism. In Oryctolagus cuniculus (Rabbit), this protein is Urea transporter 2 (SLC14A2).